Here is a 357-residue protein sequence, read N- to C-terminus: MSIQIQGVSKQYGTFQALTDIHLDIPKGELVALLGPSGSGKTTLLRIIAGLEEADGGSISFDGEDLTDIHVKNRQVGFVFQHYALFKHMNVFENVAFGLKVRKKSLRPSAEAIEEKVTELLKLVKMDGFAKRYPAQLSGGQRQRIALARALAVEPKILLLDEPFGALDAKVRKELRRWLRKLHDEFQITSVFVTHDQEEALDVADRIVVMNEGCIEQMGTPEEVYENPASPFVYDFLGNVNLFHGRVHKGKLNVGSVELEAPEHKHVSNVDGIAYVRPHDLSISHTKQSIDAIPAKVSYSHAVGNIVYVELKRDGTDEYLEAEITKEQFKQLNIQAGDFVYVQPKEVKVFIPEDFVI.

The region spanning 3-237 (IQIQGVSKQY…PASPFVYDFL (235 aa)) is the ABC transporter domain. 35–42 (GPSGSGKT) provides a ligand contact to ATP.

It belongs to the ABC transporter superfamily. Sulfate/tungstate importer (TC 3.A.1.6) family. As to quaternary structure, the complex is composed of two ATP-binding proteins (CysA), two transmembrane proteins (CysT and CysW) and a solute-binding protein (CysP).

The protein resides in the cell membrane. It carries out the reaction sulfate(out) + ATP + H2O = sulfate(in) + ADP + phosphate + H(+). The enzyme catalyses thiosulfate(out) + ATP + H2O = thiosulfate(in) + ADP + phosphate + H(+). Functionally, part of the ABC transporter complex CysAWTP involved in sulfate/thiosulfate import. Responsible for energy coupling to the transport system. This is Sulfate/thiosulfate import ATP-binding protein CysA from Bacillus cereus (strain ATCC 14579 / DSM 31 / CCUG 7414 / JCM 2152 / NBRC 15305 / NCIMB 9373 / NCTC 2599 / NRRL B-3711).